A 102-amino-acid polypeptide reads, in one-letter code: Small ribosomal subunit protein uS10 (102 aa).

Belongs to the universal ribosomal protein uS10 family. Part of the 30S ribosomal subunit.

Involved in the binding of tRNA to the ribosomes. This Methanococcus maripaludis (strain C6 / ATCC BAA-1332) protein is Small ribosomal subunit protein uS10.